Consider the following 45-residue polypeptide: MTQRTLGGTVRKRKRTSGFRARMRTKSGQNVIKARRRKGRARLTV.

The disordered stretch occupies residues 22 to 45 (RMRTKSGQNVIKARRRKGRARLTV). The span at 33-45 (KARRRKGRARLTV) shows a compositional bias: basic residues.

The protein belongs to the bacterial ribosomal protein bL34 family.

The chain is Large ribosomal subunit protein bL34 from Thermosynechococcus vestitus (strain NIES-2133 / IAM M-273 / BP-1).